We begin with the raw amino-acid sequence, 1429 residues long: Dicer-like protein 2 (1429 aa).

The 180-residue stretch at 21–200 (MFEASLKGNI…TIEMNLNSVC (180 aa)) folds into the Helicase ATP-binding domain. Position 34–41 (34–41 (MGTGSGKT)) interacts with ATP. A DEAH box motif is present at residues 141–144 (DEAH). The 167-residue stretch at 335–501 (ALISFLMSTE…EDRRRTEELR (167 aa)) folds into the Helicase C-terminal domain. The Dicer dsRNA-binding fold domain maps to 528–622 (AMQHLVHFCD…LPLTKSREFT (95 aa)). RNase III domains lie at 874–1014 (ATRL…IDGG) and 1056–1250 (QENL…VDSG). The Mg(2+) site is built by Glu-1095, Asp-1236, and Glu-1239.

The protein belongs to the helicase family. Dicer subfamily. Mg(2+) serves as cofactor. It depends on Mn(2+) as a cofactor.

Functionally, dicer-like endonuclease involved in cleaving double-stranded RNA in the RNA interference (RNAi) pathway. Produces 21 to 25 bp dsRNAs (siRNAs) which target the selective destruction of homologous RNAs leading to sequence-specific suppression of gene expression, called post-transcriptional gene silencing (PTGS). Part of a broad host defense response against viral infection and transposons. The sequence is that of Dicer-like protein 2 (dcl2) from Emericella nidulans (strain FGSC A4 / ATCC 38163 / CBS 112.46 / NRRL 194 / M139) (Aspergillus nidulans).